A 180-amino-acid polypeptide reads, in one-letter code: Ribosome-recycling factor (180 aa).

Belongs to the RRF family.

It is found in the cytoplasm. Functionally, responsible for the release of ribosomes from messenger RNA at the termination of protein biosynthesis. May increase the efficiency of translation by recycling ribosomes from one round of translation to another. The chain is Ribosome-recycling factor from Chlamydia caviae (strain ATCC VR-813 / DSM 19441 / 03DC25 / GPIC) (Chlamydophila caviae).